Here is a 1049-residue protein sequence, read N- to C-terminus: Self-sufficient cytochrome P450 monooxygenase CYP505E4 (1049 aa).

Cys405 is a heme binding site. Residues 461 to 470 show a composition bias toward polar residues; sequence SATALSQHNM. Residues 461-491 form a disordered region; that stretch reads SATALSQHNMSAGATASPGSSTHLAGDENGQ. Residues 471-482 show a composition bias toward low complexity; the sequence is SAGATASPGSST. The 142-residue stretch at 499–640 folds into the Flavodoxin-like domain; it reads ISFFYGSNSG…DLEVWEETNL (142 aa). Residues 505–509 and 584–616 contribute to the FMN site; these read SNSGT and VFGC…TRLT. The 229-residue stretch at 678-906 folds into the FAD-binding FR-type domain; that stretch reads RDLVEGKVTA…RPAKDAFHLP (229 aa).

In the N-terminal section; belongs to the cytochrome P450 family. FAD serves as cofactor. It depends on FMN as a cofactor. The cofactor is heme.

It carries out the reaction 2 oxidized [cytochrome P450] + NADPH = 2 reduced [cytochrome P450] + NADP(+) + H(+). It catalyses the reaction an organic molecule + reduced [NADPH--hemoprotein reductase] + O2 = an alcohol + oxidized [NADPH--hemoprotein reductase] + H2O + H(+). The enzyme catalyses dodecanoate + reduced [NADPH--hemoprotein reductase] + O2 = 5-hydroxydodecanoate + oxidized [NADPH--hemoprotein reductase] + H2O + H(+). The catalysed reaction is dodecan-1-ol + reduced [NADPH--hemoprotein reductase] + O2 = 1,5-dodecanediol + oxidized [NADPH--hemoprotein reductase] + H2O + H(+). It carries out the reaction dodecanoate + reduced [NADPH--hemoprotein reductase] + O2 = 9-hydroxydodecanoate + oxidized [NADPH--hemoprotein reductase] + H2O + H(+). It catalyses the reaction dodecan-1-ol + reduced [NADPH--hemoprotein reductase] + O2 = 1,4-dodecanediol + oxidized [NADPH--hemoprotein reductase] + H2O + H(+). The enzyme catalyses dodecan-1-ol + reduced [NADPH--hemoprotein reductase] + O2 = 1,6-dodecanediol + oxidized [NADPH--hemoprotein reductase] + H2O + H(+). Self-sufficient cytochrome P450 monooxygenase that catalyzes the regioselective in-chain hydroxylation of alkanes, fatty alcohols, and fatty acids at the omega-7 position. Performs hydroxylation of C10-C16 n-alkanes and C12 and C14 fatty alcohols; and thereby enables the one step biocatalytic synthesis of rare alcohols such as 5-dodecanol and 7-tetradecanol. Converts 1-dodecanol into 1,5-dodecanediol as major product with very little sub-terminally hydroxylated products with the 1,4-dodecanediol and 1,6-dodecanediol more abundant. Converts dodecanoic acid to 5-hydroxydodecanoic acid which can be further converted into delta-dodecalactone by lactonization of the 5-hydroxy acid at low pH. Also gives sub-terminal hydroxylation of dodecanoic acid with 9-hydroxydodecanoic acid being the second most abundant product. Does not show any significant activity toward tetradecanoic acid. The polypeptide is Self-sufficient cytochrome P450 monooxygenase CYP505E4 (Penicillium camemberti (strain FM 013)).